The following is a 555-amino-acid chain: Sulfite reductase [NADPH] hemoprotein beta-component (555 aa).

Cys430, Cys436, Cys475, and Cys479 together coordinate [4Fe-4S] cluster. Residue Cys479 coordinates siroheme.

The protein belongs to the nitrite and sulfite reductase 4Fe-4S domain family. Alpha(8)-beta(8). The alpha component is a flavoprotein, the beta component is a hemoprotein. The cofactor is siroheme. [4Fe-4S] cluster is required as a cofactor.

The catalysed reaction is hydrogen sulfide + 3 NADP(+) + 3 H2O = sulfite + 3 NADPH + 4 H(+). It functions in the pathway sulfur metabolism; hydrogen sulfide biosynthesis; hydrogen sulfide from sulfite (NADPH route): step 1/1. In terms of biological role, component of the sulfite reductase complex that catalyzes the 6-electron reduction of sulfite to sulfide. This is one of several activities required for the biosynthesis of L-cysteine from sulfate. This Leptospira biflexa serovar Patoc (strain Patoc 1 / Ames) protein is Sulfite reductase [NADPH] hemoprotein beta-component.